A 417-amino-acid polypeptide reads, in one-letter code: MNTNIANQLRAAKKATTDLNLIQSDTRTIILKTLAANLEKHIENIIQENQKDLSLMLEQDPRYDRLLLNKERILSLVNDVRKVANLPNPLGVNLFEKSMPNGLSIKKITVPLGVIAVIYESRPNVTIDIFSLCFKSGNVCILKGGKEAHFTNSYLLLLIKNTLKNFNINTDIVCLLPPERALMTQLLNATGLVDLCIPRGSQNLINFVRDNAKIPVIETGAGIVHTYFDKSGDLGKGKKIINNAKTRRVSVCNALDTLIIHADRLKDLPELVETLSQKNVIIYADQDAYHVLDKNYPEQLLIKAKPQDFGHEFLDYKLAIKTVPNIKAAIDHIQQFSSHHSEAVIAEDESAIDKFLTEVDAAAVYANASTAFTDGGEFGLGAEIGISTQKVHARGPMGLEALTSYKWVIRGTGQIRD.

It belongs to the gamma-glutamyl phosphate reductase family.

The protein localises to the cytoplasm. The enzyme catalyses L-glutamate 5-semialdehyde + phosphate + NADP(+) = L-glutamyl 5-phosphate + NADPH + H(+). The protein operates within amino-acid biosynthesis; L-proline biosynthesis; L-glutamate 5-semialdehyde from L-glutamate: step 2/2. In terms of biological role, catalyzes the NADPH-dependent reduction of L-glutamate 5-phosphate into L-glutamate 5-semialdehyde and phosphate. The product spontaneously undergoes cyclization to form 1-pyrroline-5-carboxylate. This chain is Gamma-glutamyl phosphate reductase, found in Legionella pneumophila subsp. pneumophila (strain Philadelphia 1 / ATCC 33152 / DSM 7513).